A 144-amino-acid polypeptide reads, in one-letter code: Peroxisome assembly protein 22 (144 aa).

The chain crosses the membrane as a helical span at residues 13-35 (YGAVSLASLLVAASIVAYRWWNA).

The protein belongs to the peroxin-22 family.

The protein resides in the peroxisome membrane. Its function is as follows. Involved in peroxisome biogenesis. The protein is Peroxisome assembly protein 22 (PEX22) of Eremothecium gossypii (strain ATCC 10895 / CBS 109.51 / FGSC 9923 / NRRL Y-1056) (Yeast).